Consider the following 750-residue polypeptide: Catalase-peroxidase 1 (750 aa).

The segment at residues 90–238 (WHSAGTYRVM…VSAAHMGLIY (149 aa)) is a cross-link (tryptophyl-tyrosyl-methioninium (Trp-Tyr) (with M-264)). The active-site Proton acceptor is the His91. A disordered region spans residues 199–218 (NEGHKESGVIDGSESKKGHK). A compositionally biased stretch (basic and acidic residues) spans 200-218 (EGHKESGVIDGSESKKGHK). Residues 238–264 (YVNPEGPDGIPDPVAAARDIRTTFSRM) constitute a cross-link (tryptophyl-tyrosyl-methioninium (Tyr-Met) (with W-90)). Residue His279 coordinates heme b.

It belongs to the peroxidase family. Peroxidase/catalase subfamily. As to quaternary structure, homodimer or homotetramer. Predominantly homodimeric. Heme b is required as a cofactor. In terms of processing, formation of the three residue Trp-Tyr-Met cross-link is important for the catalase, but not the peroxidase activity of the enzyme.

The protein localises to the cytoplasm. It catalyses the reaction H2O2 + AH2 = A + 2 H2O. The enzyme catalyses 2 H2O2 = O2 + 2 H2O. Bifunctional enzyme with both catalase and broad-spectrum peroxidase activity. This Pyricularia oryzae (strain 70-15 / ATCC MYA-4617 / FGSC 8958) (Rice blast fungus) protein is Catalase-peroxidase 1.